Reading from the N-terminus, the 265-residue chain is Thiazole synthase (265 aa).

Residue lysine 106 is the Schiff-base intermediate with DXP of the active site. Residues glycine 167, 193–194 (AG), and 215–216 (NS) contribute to the 1-deoxy-D-xylulose 5-phosphate site.

Belongs to the ThiG family. In terms of assembly, homotetramer. Forms heterodimers with either ThiH or ThiS.

Its subcellular location is the cytoplasm. It catalyses the reaction [ThiS sulfur-carrier protein]-C-terminal-Gly-aminoethanethioate + 2-iminoacetate + 1-deoxy-D-xylulose 5-phosphate = [ThiS sulfur-carrier protein]-C-terminal Gly-Gly + 2-[(2R,5Z)-2-carboxy-4-methylthiazol-5(2H)-ylidene]ethyl phosphate + 2 H2O + H(+). It participates in cofactor biosynthesis; thiamine diphosphate biosynthesis. In terms of biological role, catalyzes the rearrangement of 1-deoxy-D-xylulose 5-phosphate (DXP) to produce the thiazole phosphate moiety of thiamine. Sulfur is provided by the thiocarboxylate moiety of the carrier protein ThiS. In vitro, sulfur can be provided by H(2)S. This Prochlorococcus marinus subsp. pastoris (strain CCMP1986 / NIES-2087 / MED4) protein is Thiazole synthase.